The sequence spans 315 residues: Glycerol-3-phosphate dehydrogenase [NAD(P)+] (315 aa).

Residues tryptophan 24, arginine 44, arginine 45, and lysine 92 each coordinate NADPH. Positions 92 and 120 each coordinate sn-glycerol 3-phosphate. Serine 124 serves as a coordination point for NADPH. Sn-glycerol 3-phosphate is bound by residues lysine 175, aspartate 228, serine 238, arginine 239, and asparagine 240. Catalysis depends on lysine 175, which acts as the Proton acceptor. Arginine 239 provides a ligand contact to NADPH. Residue glutamate 265 coordinates NADPH.

It belongs to the NAD-dependent glycerol-3-phosphate dehydrogenase family.

It is found in the cytoplasm. It carries out the reaction sn-glycerol 3-phosphate + NAD(+) = dihydroxyacetone phosphate + NADH + H(+). The enzyme catalyses sn-glycerol 3-phosphate + NADP(+) = dihydroxyacetone phosphate + NADPH + H(+). The protein operates within membrane lipid metabolism; glycerophospholipid metabolism. Catalyzes the reduction of the glycolytic intermediate dihydroxyacetone phosphate (DHAP) to sn-glycerol 3-phosphate (G3P), the key precursor for phospholipid synthesis. The protein is Glycerol-3-phosphate dehydrogenase [NAD(P)+] of Synechococcus sp. (strain JA-2-3B'a(2-13)) (Cyanobacteria bacterium Yellowstone B-Prime).